A 341-amino-acid chain; its full sequence is 4-hydroxy-2-oxovalerate aldolase (341 aa).

Positions 9 to 259 (VRITEVCLRD…KLDIDLYKMM (251 aa)) constitute a Pyruvate carboxyltransferase domain. Residue 17 to 18 (RD) participates in substrate binding. Asp18 provides a ligand contact to Mn(2+). His21 acts as the Proton acceptor in catalysis. Ser171 and His198 together coordinate substrate. Residues His198 and His200 each contribute to the Mn(2+) site. A substrate-binding site is contributed by Tyr289.

Belongs to the 4-hydroxy-2-oxovalerate aldolase family.

The catalysed reaction is (S)-4-hydroxy-2-oxopentanoate = acetaldehyde + pyruvate. This is 4-hydroxy-2-oxovalerate aldolase from Bacillus thuringiensis (strain Al Hakam).